Consider the following 122-residue polypeptide: MSLTNDQIVEALSAKTVLEIAELVKTLEEKWGVSAAAPVAAAAAGPAAAVEEKTAFDVILVDAGANKINVIKEVRGLTGLGLAEAKALVEAGNKAVKEGATKEDAEKIKKALEAAGAKVTVK.

This sequence belongs to the bacterial ribosomal protein bL12 family. In terms of assembly, homodimer. Part of the ribosomal stalk of the 50S ribosomal subunit. Forms a multimeric L10(L12)X complex, where L10 forms an elongated spine to which 2 to 4 L12 dimers bind in a sequential fashion. Binds GTP-bound translation factors.

In terms of biological role, forms part of the ribosomal stalk which helps the ribosome interact with GTP-bound translation factors. Is thus essential for accurate translation. This is Large ribosomal subunit protein bL12 from Bdellovibrio bacteriovorus (strain ATCC 15356 / DSM 50701 / NCIMB 9529 / HD100).